A 213-amino-acid chain; its full sequence is MAGAMTMSRRRLSHALLLVLAILPNLAALAVAAGGGSGGGGFFPHRSLLQSSSCQPSGAITGTSGDCNADNGSECCQDGVQYMTYACSPPVAAGGTGTAALLTLNSFADGGDGGGAPSCTGRFYDDGQLVVALSTGWFDGRSRCEKDVVIRASGGASVTAMVVDECDSQRGCDSDHNFEPPCRNNIVDGSPAVWDALGLNKDDGEAQITWSDA.

The first 32 residues, methionine 1 to alanine 32, serve as a signal peptide directing secretion.

It belongs to the kiwellin family.

Its subcellular location is the secreted. The polypeptide is Ripening-related protein 3 (Oryza sativa subsp. japonica (Rice)).